The sequence spans 190 residues: Xanthine phosphoribosyltransferase (190 aa).

Residues Leu20 and Asn27 each contribute to the xanthine site. 128-132 provides a ligand contact to 5-phospho-alpha-D-ribose 1-diphosphate; it reads ANGHA. Xanthine is bound at residue Lys156.

This sequence belongs to the purine/pyrimidine phosphoribosyltransferase family. Xpt subfamily. In terms of assembly, homodimer.

Its subcellular location is the cytoplasm. It catalyses the reaction XMP + diphosphate = xanthine + 5-phospho-alpha-D-ribose 1-diphosphate. Its pathway is purine metabolism; XMP biosynthesis via salvage pathway; XMP from xanthine: step 1/1. Its function is as follows. Converts the preformed base xanthine, a product of nucleic acid breakdown, to xanthosine 5'-monophosphate (XMP), so it can be reused for RNA or DNA synthesis. The polypeptide is Xanthine phosphoribosyltransferase (Pseudomonas paraeruginosa (strain DSM 24068 / PA7) (Pseudomonas aeruginosa (strain PA7))).